The sequence spans 530 residues: Metal transporter Nramp5 (530 aa).

Positions 1 to 10 (MTGSTVSRQE) are enriched in polar residues. The interval 1 to 53 (MTGSTVSRQENSPKRPNDSNGEFKRLLVPETSQPEEDELHESPPENQILNVEE) is disordered. The segment covering 11 to 27 (NSPKRPNDSNGEFKRLL) has biased composition (basic and acidic residues). Helical transmembrane passes span 65-85 (FSWA…IAFL), 98-118 (AVAG…GLLM), 147-167 (ILLW…EVIG), 179-199 (FLPI…ISYL), 207-227 (LEGL…WMFN), 253-273 (AVGV…SALV), 299-319 (AALF…AKGF), 341-361 (YGGG…AAGQ), 387-407 (LSAF…AIMF), 429-449 (IPFA…MGVF), 458-478 (LAWT…LDFF), and 485-505 (FLVG…IIYL).

This sequence belongs to the NRAMP (TC 2.A.55) family.

It localises to the membrane. Functionally, seems to be involved in iron uptake. This is Metal transporter Nramp5 (NRAMP5) from Arabidopsis thaliana (Mouse-ear cress).